The chain runs to 205 residues: Ras-related protein RABB1a (205 aa).

GTP is bound at residue 13 to 20 (GDTGVGKS). An Effector region motif is present at residues 35–43 (HDLTIGVEF). Residues 61 to 65 (DTAGQ), 119 to 122 (NKCD), and 149 to 150 (SA) contribute to the GTP site. Residues 179–205 (ANEPGITPGPFGGKDASSSQQRRGCCG) form a disordered region. Residues 194–205 (ASSSQQRRGCCG) show a composition bias toward polar residues. S-geranylgeranyl cysteine attachment occurs at residues Cys203 and Cys204.

Belongs to the small GTPase superfamily. Rab family.

The protein localises to the cell membrane. Intracellular vesicle trafficking and protein transport. The chain is Ras-related protein RABB1a (RABB1A) from Arabidopsis thaliana (Mouse-ear cress).